A 313-amino-acid polypeptide reads, in one-letter code: E3 ubiquitin-protein ligase RNF126 (313 aa).

A2 carries the post-translational modification N-acetylalanine. Position 5 is a phosphoserine (S5). Positions 5 to 100 are required for interaction with BAG6; sequence SPQPGRYFCH…FEIPTFPPGA (96 aa). C13, C16, C29, and C32 together coordinate Zn(2+). The C4-type zinc-finger motif lies at 13 to 32; sequence CHCCSVEIVPRLPDYICPRC. 2 disordered regions span residues 42-63 and 95-128; these read EETR…QNRQ and TFPP…RQPR. The span at 47–63 shows a compositional bias: polar residues; sequence TENGSAPSTAPTDQNRQ. The segment covering 103 to 116 has biased composition (basic and acidic residues); sequence DDGRDPESRREREH. Residues 117-128 show a composition bias toward basic residues; sequence QSRHRYGARQPR. Residues 202–306 form a sufficient for interaction with AICDA region; that stretch reads TGPPPADKEK…SSSSSSSPSN (105 aa). The RING-type zinc-finger motif lies at 231 to 272; sequence CPVCKEDYALGESVRQLPCNHLFHDSCIVPWLEQHDSCPVCR. Positions 279 to 313 are disordered; the sequence is NTATNPPGLTGVGFSSSSSSSSSSSPSNENATSNS. Residues 293–313 are compositionally biased toward low complexity; the sequence is SSSSSSSSSSSPSNENATSNS.

Interacts with CCDC50, EGFR, FLT3 and SCAMP3. Interacts with BAG6 (via ubiquitin-like domain); required for BAG6-dependent ubiquitination of proteins mislocalized to the cytosol. Interacts with CDKN1A. Interacts with AICDA. In terms of processing, ubiquitinated. May undergo autoubiquitination. Detected in B-cells (at protein level).

It is found in the cytoplasm. The protein resides in the nucleus. The catalysed reaction is S-ubiquitinyl-[E2 ubiquitin-conjugating enzyme]-L-cysteine + [acceptor protein]-L-lysine = [E2 ubiquitin-conjugating enzyme]-L-cysteine + N(6)-ubiquitinyl-[acceptor protein]-L-lysine.. The protein operates within protein modification; protein ubiquitination. Its function is as follows. E3 ubiquitin-protein ligase that mediates ubiquitination oF target proteins. Depending on the associated E2 ligase, mediates 'Lys-27'-, 'Lys-29'-, 'Lys-48'- and/or 'Lys-63'-linked polyubiquitination of substrates. Part of a BAG6-dependent quality control process ensuring that proteins of the secretory pathway that are mislocalized to the cytosol are degraded by the proteasome. Probably acts by providing the ubiquitin ligase activity associated with the BAG6 complex and be responsible for ubiquitination of the hydrophobic mislocalized proteins and their targeting to the proteasome. May also play a role in the endosomal recycling of IGF2R, the cation-independent mannose-6-phosphate receptor. May play a role in the endosomal sorting and degradation of several membrane receptors including EGFR, FLT3, MET and CXCR4, by mediating their ubiquitination. By ubiquitinating CDKN1A/p21 and targeting it for degradation, may also promote cell proliferation. May monoubiquitinate AICDA. Acts as a regulator of DNA repair by mediating 'Lys-27'- and 'Lys-29'-linked polyubiquitination of MRE11, thereby promoting the exonuclease activity of MRE11. In Mus musculus (Mouse), this protein is E3 ubiquitin-protein ligase RNF126.